Consider the following 872-residue polypeptide: MKQMSSAQIRQMWLDFWASKGHSVEPSVSLVPVNDPTLLWINSGVATLKKYFDGTIIPENPRITNAQKAIRTNDIENVGKTARHHTMFEMLGNFSIGDYFRDEAITWAYELLTSPEWFDFPAEKLYMTYYPDDKDSYNRWIEVGVDPSHLIPIEDNFWEIGAGPSGPDTEIFFDRGEAFDPENIGLRLLAEDIENDRYIEIWNIVLSQFNADPAVPRSEYKELPHKNIDTGAGLERLVAVIQGAKTNFETDLFMPIIREVEKLSGKVYDQDGDNMSFKVIADHIRSLSFAIGDGALPGNEGRGYVLRRLLRGASMHGQKLGINEPFLYKLVPTVGKIMESYYPEVLEKRDFIEKIVKSEEESFARTLHSGQHFAETIVADLKAKGQNVIAGQDVFKLYDTYGFPVELTEEIAEEAGMTVDREGFEVAMKEQQERARASAVKGGSMGMQNETLQNITVESVFNYNASQLPSKLVAIVAENAEVEAVSEGTASLIFAETPFYAEMGGQVADHGQILDATGNLVATVTDVQKAPNGQALHTVEVLAPLALNQEYTLAIDTNRRHRVMKNHTATHLLHAALHNILGHHATQAGSLNEVEFLRFDFTHFQAVTPEELRAIEQQVNEKIWEAIAVETVETDIDTAKEMGAMALFGEKYGKEVRVVTIGDYSVELCGGTHVGNTSEIGLFKIVKEEGIGSGTRRILAVTGKEAFEAYREQEDALKAVAATLKAPQLKEVPHKVEGLQEQLRQLQKENAELKEKAAAAAAGDVFKDVKEVNGHRYIVSQVSVSDAGALRTFADNWKQKDYSDVLVLVAAIGDKVNALVASKTKDIHAGNLVKELAPIVDGRGGGKPDMAMAGGSNQAKIQELLEAVAGKL.

Positions 567, 571, 669, and 673 each coordinate Zn(2+).

It belongs to the class-II aminoacyl-tRNA synthetase family. Requires Zn(2+) as cofactor.

It is found in the cytoplasm. It carries out the reaction tRNA(Ala) + L-alanine + ATP = L-alanyl-tRNA(Ala) + AMP + diphosphate. Its function is as follows. Catalyzes the attachment of alanine to tRNA(Ala) in a two-step reaction: alanine is first activated by ATP to form Ala-AMP and then transferred to the acceptor end of tRNA(Ala). Also edits incorrectly charged Ser-tRNA(Ala) and Gly-tRNA(Ala) via its editing domain. This Streptococcus gordonii (strain Challis / ATCC 35105 / BCRC 15272 / CH1 / DL1 / V288) protein is Alanine--tRNA ligase.